The sequence spans 153 residues: Ribonuclease H (153 aa).

The RNase H type-1 domain occupies methionine 1–serine 141. 4 residues coordinate Mg(2+): aspartate 9, glutamate 47, aspartate 69, and aspartate 133.

This sequence belongs to the RNase H family. As to quaternary structure, monomer. Requires Mg(2+) as cofactor.

The protein resides in the cytoplasm. It carries out the reaction Endonucleolytic cleavage to 5'-phosphomonoester.. Functionally, endonuclease that specifically degrades the RNA of RNA-DNA hybrids. In Pseudoalteromonas atlantica (strain T6c / ATCC BAA-1087), this protein is Ribonuclease H.